The chain runs to 97 residues: Antitoxin TacA2 (97 aa).

Belongs to the TacA antitoxin family. As to quaternary structure, homodimer. Forms a complex with cognate toxin TacT2.

Antitoxin component of a type II toxin-antitoxin (TA) system. Counteracts the toxic effect of cognate toxin TacT2. Functionally, the TacA2-TacT2 complex both represses and derepresses expression of its own operon. In Salmonella enteritidis, this protein is Antitoxin TacA2.